We begin with the raw amino-acid sequence, 222 residues long: Germin-like protein 11-1 (222 aa).

An N-terminal signal peptide occupies residues 1–23 (MKLSTVLCCYLLLLGLFAPEIIS). A disulfide bond links C32 and C49. In terms of domain architecture, Cupin type-1 spans 72–195 (DNMVRSSANI…AMFAPDSEVA (124 aa)). 4 residues coordinate Mn(2+): H111, H113, E118, and H157.

This sequence belongs to the germin family. In terms of assembly, oligomer (believed to be a pentamer but probably hexamer).

It localises to the secreted. Its subcellular location is the extracellular space. It is found in the apoplast. In terms of biological role, may play a role in plant defense. Probably has no oxalate oxidase activity even if the active site is conserved. The chain is Germin-like protein 11-1 from Oryza sativa subsp. japonica (Rice).